The sequence spans 361 residues: Cdc42 effector protein 1 (361 aa).

Residues 1–29 (MPGPQGAGGAPAMNLGKLSPVGWVSSSQG) are disordered. Phosphoserine occurs at positions 19 and 27. Phosphothreonine is present on Thr34. A CRIB domain is found at 38–52 (ISPPLGDFRHTMHVG). Position 39 is a phosphoserine (Ser39). At Arg53 the chain carries Omega-N-methylarginine. Phosphoserine occurs at positions 65, 73, 77, 101, 113, 121, 139, 180, 190, 192, and 195. The disordered stretch occupies residues 161–186 (CTISRLPRPEKPRDRDRDSSFPAEPE). Positions 167-186 (PRPEKPRDRDRDSSFPAEPE) are enriched in basic and acidic residues. Disordered regions lie at residues 218–300 (EGSA…SRHH) and 320–361 (SWGS…EVKV). Tandem repeats lie at residues 220–226 (SAAETPA), 229–235 (PAASPPA), 236–242 (SVANPPA), and 243–249 (PASSPSL). A 4 X 7 AA tandem repeats of [PT]-[AT]-A-[ENT]-[PT]-[PTS]-[AG] region spans residues 220–249 (SAAETPAPAPAASPPASVANPPAPASSPSL). 3 positions are modified to phosphoserine: Ser270, Ser320, and Ser323. The span at 332–347 (QAGSRTPVPSTVQANT) shows a compositional bias: polar residues. Over residues 351–361 (ADAEEDDEVKV) the composition is skewed to acidic residues.

This sequence belongs to the BORG/CEP family. As to quaternary structure, interacts with RHOQ and CDC42, in a GTP-dependent manner.

The protein resides in the endomembrane system. The protein localises to the cytoplasm. It is found in the cytoskeleton. Functionally, probably involved in the organization of the actin cytoskeleton. Induced membrane extensions in fibroblasts. This is Cdc42 effector protein 1 from Bos taurus (Bovine).